A 110-amino-acid chain; its full sequence is UPF0339 protein SO_3888 (110 aa).

2 consecutive repeat copies span residues 10–58 and 61–109.

It belongs to the UPF0339 family. Duplicated subfamily.

The chain is UPF0339 protein SO_3888 from Shewanella oneidensis (strain ATCC 700550 / JCM 31522 / CIP 106686 / LMG 19005 / NCIMB 14063 / MR-1).